The chain runs to 1742 residues: MAVAELYTQYNRVWIPDPEEVWKSAEIAKDYRVGDKVLRLLLEDGTELDYSVNPESLPPLRNPDILVGENDLTALSYLHEPAVLHNLRIRFAESKLIYTYSGIILVAMNPYKQLPIYGDAIIHAYSGQNMGDMDPHIFAVAEEAYKQMARNNRNQSIIVSGESGAGKTVSARYAMRYFATVSKSGSNAHVEDKVLASNPITEAVGNAKTTRNDNSSRFGKYTEISFDEQNQIIGANMSTYLLEKSRVVFQSENERNYHIFYQLCASAQQSEFKHLKLGSAEEFNYTRMGGNTVIEGVNDRAEMVETQKTFTLLGFKEDFQMDVFKILAAILHLGNVQITAVGNERSSVSEDDSHLKVFCELLGLESGRVAQWLCNRKIVTSSETVVKPMTRPQAVNARDALAKKIYAHLFDFIVERINQALQFSGKQHTFIGVLDIYGFETFDVNSFEQFCINYANEKLQQQFNMHVFKLEQEEYMKEDIPWTLIDFYDNQPVIDLIEAKMGILELLDEECLLPHGTDENWLQKLYNNFVNRNPLFEKPRMSNTSFVIQHFADKVEYKCEGFLEKNRDTVYDMLVEILRASKFHLCANFFQENPTPPSPFGSMITVKSAKQVIKPNSKHFRTTVGSKFRSSLYLLMETLNATTPHYVRCIKPNDEKLPFEFDSKRIVQQLRACGVLETIRISAQSYPSRWTYIEFYSRYGILMTKQELSFSDKKEVCKVVLHRLIQDSNQYQFGKTKIFFRAGQVAYLEKLRLDKLRQSCVMVQKHMRGWLQRKKFLRERRAALIIQQYFRGQQTVRKAITAVALKEAWAAIIIQKHCRGYLVRSLYQLIRMATITMQAYSRGFLARRRYRKMLEEHKAVILQKYARAWLARRRFQSIRRFVLNIQLTYRVQRLQKKLEDQNKENHGLVEKLTSLAALRAGDVEKIQKLEAELEKAATHRRNYEEKGKRYRDAVEEKLAKLQKHNSELETQKEQIQLKLQEKTEELKEKMDNLTKQLFDDVQKEERQRMLLEKSFELKTQDYEKQIQSLKEEIKALKDEKMQLQHLVEGEHVTSDGLKAEVARLSKQVKTISEFEKEIELLQAQKIDVEKHVQSQKREMREKMSEITKQLLESYDIEDVRSRLSVEDLEHLNEDGELWFAYEGLKKATRVLESHFQSQKDCYEKEIEALNFKVVHLSQEINHLQKLFREENDINESIRHEVTRLTSENMMIPDFKQQISELEKQKQDLEIRLNEQAEKMKGKLEELSNQLHRSQEEEGTQRKALEAQNEIHTKEKEKLIDKIQEMQEASDHLKKQFETESEVKCNFRQEASRLTLENRDLEEELDMKDRVIKKLQDQVKTLSKTIGKANDVHSSSGPKEYLGMLQYKREDEAKLIQNLILDLKPRGVVVNMIPGLPAHILFMCVRYADSLNDANMLKSLMNSTINGIKQVVKEHLEDFEMLSFWLSNTCHFLNCLKQYSGEEEFMKHNSPQQNKNCLNNFDLSEYRQILSDVAIRIYHQFIIIMEKNIQPIIVPGMLEYESLQGISGLKPTGFRKRSSSIDDTDGYTMTSVLQQLSYFYTTMCQNGLDPELVRQAVKQLFFLIGAVTLNSLFLRKDMCSCRKGMQIRCNISYLEEWLKDKNLQNSLAKETLEPLSQAAWLLQVKKTTDSDAKEIYERCTSLSAVQIIKILNSYTPIDDFEKRVTPSFVRKVQALLNSREDSSQLMLDTKYLFQVTFPFTPSPHALEMIQIPSSFKLGFLNRL.

Alanine 2 is modified (N-acetylalanine). Residues 8–62 (TQYNRVWIPDPEEVWKSAEIAKDYRVGDKVLRLLLEDGTELDYSVNPESLPPLRN) form the Myosin N-terminal SH3-like domain. In terms of domain architecture, Myosin motor spans 67-753 (VGENDLTALS…QVAYLEKLRL (687 aa)). Position 161-168 (161-168 (GESGAGKT)) interacts with ATP. The segment at 632–654 (LYLLMETLNATTPHYVRCIKPND) is actin-binding. IQ domains lie at 756 to 779 (LRQS…FLRE), 780 to 806 (RRAA…VALK), 807 to 829 (EAWA…LYQL), 830 to 854 (IRMA…RKML), and 855 to 884 (EEHK…FVLN). The stretch at 884-1351 (NIQLTYRVQR…SKTIGKANDV (468 aa)) forms a coiled coil. Residues 1421 to 1697 (NSTINGIKQV…VRKVQALLNS (277 aa)) enclose the Dilute domain.

This sequence belongs to the TRAFAC class myosin-kinesin ATPase superfamily. Myosin family. As to expression, expressed chiefly in non-neuronal tissues. Particularly abundant in epithelial and glandular tissues including pancreas, prostate, mammary, stomach, colon and lung.

Functionally, may be involved in transferrin trafficking. Likely to power actin-based membrane trafficking in many physiologically crucial tissues. In Homo sapiens (Human), this protein is Unconventional myosin-Vc (MYO5C).